The sequence spans 409 residues: Elongation factor Tu, cyanelle (409 aa).

The 205-residue stretch at 10–214 (KPHVNIGTIG…AVDEYIPTPE (205 aa)) folds into the tr-type G domain. A G1 region spans residues 19 to 26 (GHVDHGKT). 19–26 (GHVDHGKT) is a GTP binding site. Threonine 26 lines the Mg(2+) pocket. Positions 60 to 64 (GITIN) are G2. The G3 stretch occupies residues 81–84 (DCPG). GTP is bound by residues 81–85 (DCPGH) and 136–139 (NKED). The G4 stretch occupies residues 136-139 (NKED). Positions 174–176 (SAL) are G5.

Belongs to the TRAFAC class translation factor GTPase superfamily. Classic translation factor GTPase family. EF-Tu/EF-1A subfamily.

The protein resides in the plastid. It localises to the cyanelle. The enzyme catalyses GTP + H2O = GDP + phosphate + H(+). Functionally, GTP hydrolase that promotes the GTP-dependent binding of aminoacyl-tRNA to the A-site of ribosomes during protein biosynthesis. This Cyanophora paradoxa protein is Elongation factor Tu, cyanelle (tufA).